Here is a 403-residue protein sequence, read N- to C-terminus: Putative transport protein TP_0553 (403 aa).

The next 8 helical transmembrane spans lie at 10 to 30 (ISLFVLLALMFVLVCMLFVPY), 31 to 51 (LTVLLWSSILAILLSPCYRAL), 92 to 112 (AAVFSLVITLLVTTVFFFIAI), 202 to 222 (LYFFFLDGEHLSCLLIAALPL), 243 to 263 (KGLFSIAFYQTCVAFVFYGIF), 271 to 291 (LAMLTFFASFLPLVGCACVWL), 293 to 313 (VGISIGFTSGWMRGTLFLFVA), and 350 to 370 (TFGFNGMVLGPILVILLFTVI).

It belongs to the autoinducer-2 exporter (AI-2E) (TC 2.A.86) family.

Its subcellular location is the cell membrane. This Treponema pallidum (strain Nichols) protein is Putative transport protein TP_0553.